A 354-amino-acid polypeptide reads, in one-letter code: Protein OVEREXPRESSOR OF CATIONIC PEROXIDASE 3 (354 aa).

A Nuclear localization signal 1 motif is present at residues 63-70; that stretch reads NRKGFVSS. 2 disordered regions span residues 65–98 and 151–186; these read KGFV…EDPF and TGDV…PTKL. The span at 154-181 shows a compositional bias: acidic residues; that stretch reads VDVDVDNDDDDNDDDDNDDDDDDSEEDE. The short motif at 191-198 is the Nuclear localization signal 2 element; the sequence is LKRLAYAL. Residues 243-264 form a disordered region; the sequence is KPPVAAPENSSPDPSPVESLSA. The homeobox DNA-binding region spans 286–345; it reads RWSAQKRVKKAHIETLEKVYRRSKRPTNAVVSSIVQVTNLPRKRVLKWFEDKRAEDGVPD. Positions 293–300 match the Nuclear localization signal 3 motif; that stretch reads VKKAHIET.

It localises to the nucleus. Functionally, may modulate chromatin structure by regulation of nucleosome assembly/disassembly. Homeodomain transcription factor that mediates jasmonic acid (JA)-mediated COI1-dependent and abscisic acid (ABA)-mediated PMR4-dependent resistance to infection by necrotrophic fungal pathogens (e.g. B.cinerea and P.cucumerina) and bacterial pathogens (e.g. P.syringae DC3000); this resistance involves at least callose deposition. Required for the P.fluorescens WCS417r-triggered JA-dependent induced systemic resistance (ISR) against both P.syringae DC3000 and H.arabidopsidis. Negative regulator of the ABA-dependent drought resistance. The sequence is that of Protein OVEREXPRESSOR OF CATIONIC PEROXIDASE 3 from Arabidopsis thaliana (Mouse-ear cress).